Here is a 202-residue protein sequence, read N- to C-terminus: Inosine triphosphate pyrophosphatase (202 aa).

ITP is bound at residue 8-13; that stretch reads TGNANK. Position 55 (Glu55) interacts with Mg(2+). ITP contacts are provided by residues Lys67, 83–84, Lys100, 159–162, Lys182, and 187–188; these read DT, FGWD, and HR.

This sequence belongs to the HAM1 NTPase family. Homodimer. Requires Mg(2+) as cofactor. It depends on Mn(2+) as a cofactor.

The protein resides in the cytoplasm. The protein localises to the nucleus. The catalysed reaction is ITP + H2O = IMP + diphosphate + H(+). The enzyme catalyses dITP + H2O = dIMP + diphosphate + H(+). It catalyses the reaction XTP + H2O = XMP + diphosphate + H(+). Its function is as follows. Pyrophosphatase that hydrolyzes non-canonical purine nucleotides such as inosine triphosphate (ITP), deoxyinosine triphosphate (dITP) or xanthosine 5'-triphosphate (XTP) to their respective monophosphate derivatives. The enzyme does not distinguish between the deoxy- and ribose forms. Probably excludes non-canonical purines from RNA and DNA precursor pools, thus preventing their incorporation into RNA and DNA and avoiding chromosomal lesions. This Candida albicans (strain SC5314 / ATCC MYA-2876) (Yeast) protein is Inosine triphosphate pyrophosphatase.